The chain runs to 1499 residues: Condensin complex subunit 1 (1499 aa).

Disordered stretches follow at residues 1–43 (MPRK…DGLS) and 1421–1499 (ITKN…MLDD). Positions 1432 to 1446 (PTTMSGSSRTTSRAA) are enriched in low complexity. 2 stretches are compositionally biased toward acidic residues: residues 1458–1467 (SDEDDSDSDD) and 1486–1499 (ADDDSDSDEFMLDD).

Belongs to the CND1 (condensin subunit 1) family. Component of the condensin I complex, which contains the mix-1/SMC2 and smc-4/SMC4 heterodimer, and three non SMC subunits that probably regulate the complex: dpy-26, capg-1 and dpy-28. Within the complex, interacts with dpy-26 and smc-4. Component of the dosage compensation complex, which consist of the condensin I like components mix-1/SMC2 and dpy-27/SMC4, and the three non SMC subunits dpy-26, capg-1 and dpy-28. Within the complex, interacts with mix-1, dpy-27, dpy-26 and capg-1. Interacts with smcl-1. Sumoylated. Sumoylated in the context of the dosage compensation complex but not in the condensin I complex. Sumoylation is important for assembly of the dosage compensation complex and its robust binding to the X chromosome. Expressed in somatic and germline tissues (at protein level).

Its subcellular location is the nucleus. It is found in the chromosome. Required for both chromosome condensation and segregation during mitosis and meiosis and X-chromosome dosage compensation depending on its binding partners. Regulatory subunit of the condensin I complex, a complex required for conversion of interphase chromatin into mitotic-like condense chromosomes. The condensin I complex probably introduces positive supercoils into relaxed DNA in the presence of type I topoisomerases and converts nicked DNA into positive knotted forms in the presence of type II topoisomerases. The condensin I complex function is required for proper chromosome segregation in mitosis and meiosis. As a member of the condensin I complex, further controls the crossover number and distribution in meiosis by restricting double strand break formation, possibly by influencing higher-order chromosome structure. Plays a role in robust cytokinesis upon presence of chromatin obstructions. Also a member of the condensin I-like dosage compensation complex that associates specifically with hermaphrodite X chromosomes to reduce their gene transcription during interphase, possibly through chromatin reorganization. The protein is Condensin complex subunit 1 of Caenorhabditis elegans.